Here is a 110-residue protein sequence, read N- to C-terminus: Nucleoid-associated protein Mvan_5528 (110 aa).

Belongs to the YbaB/EbfC family. In terms of assembly, homodimer.

The protein localises to the cytoplasm. It localises to the nucleoid. Its function is as follows. Binds to DNA and alters its conformation. May be involved in regulation of gene expression, nucleoid organization and DNA protection. This chain is Nucleoid-associated protein Mvan_5528, found in Mycolicibacterium vanbaalenii (strain DSM 7251 / JCM 13017 / BCRC 16820 / KCTC 9966 / NRRL B-24157 / PYR-1) (Mycobacterium vanbaalenii).